The sequence spans 282 residues: 4-hydroxy-3-methylbut-2-enyl diphosphate reductase (282 aa).

C14 contributes to the [4Fe-4S] cluster binding site. Positions 43 and 78 each coordinate (2E)-4-hydroxy-3-methylbut-2-enyl diphosphate. Residues H43 and H78 each contribute to the dimethylallyl diphosphate site. 2 residues coordinate isopentenyl diphosphate: H43 and H78. C100 is a [4Fe-4S] cluster binding site. H128 lines the (2E)-4-hydroxy-3-methylbut-2-enyl diphosphate pocket. Position 128 (H128) interacts with dimethylallyl diphosphate. Position 128 (H128) interacts with isopentenyl diphosphate. Residue E130 is the Proton donor of the active site. T164 is a (2E)-4-hydroxy-3-methylbut-2-enyl diphosphate binding site. Position 192 (C192) interacts with [4Fe-4S] cluster. (2E)-4-hydroxy-3-methylbut-2-enyl diphosphate is bound by residues S220, S221, N222, and S266. S220, S221, N222, and S266 together coordinate dimethylallyl diphosphate. Isopentenyl diphosphate-binding residues include S220, S221, N222, and S266.

Belongs to the IspH family. [4Fe-4S] cluster serves as cofactor.

The enzyme catalyses isopentenyl diphosphate + 2 oxidized [2Fe-2S]-[ferredoxin] + H2O = (2E)-4-hydroxy-3-methylbut-2-enyl diphosphate + 2 reduced [2Fe-2S]-[ferredoxin] + 2 H(+). The catalysed reaction is dimethylallyl diphosphate + 2 oxidized [2Fe-2S]-[ferredoxin] + H2O = (2E)-4-hydroxy-3-methylbut-2-enyl diphosphate + 2 reduced [2Fe-2S]-[ferredoxin] + 2 H(+). The protein operates within isoprenoid biosynthesis; dimethylallyl diphosphate biosynthesis; dimethylallyl diphosphate from (2E)-4-hydroxy-3-methylbutenyl diphosphate: step 1/1. Its pathway is isoprenoid biosynthesis; isopentenyl diphosphate biosynthesis via DXP pathway; isopentenyl diphosphate from 1-deoxy-D-xylulose 5-phosphate: step 6/6. Its function is as follows. Catalyzes the conversion of 1-hydroxy-2-methyl-2-(E)-butenyl 4-diphosphate (HMBPP) into a mixture of isopentenyl diphosphate (IPP) and dimethylallyl diphosphate (DMAPP). Acts in the terminal step of the DOXP/MEP pathway for isoprenoid precursor biosynthesis. The sequence is that of 4-hydroxy-3-methylbut-2-enyl diphosphate reductase from Clostridium perfringens (strain 13 / Type A).